Here is a 660-residue protein sequence, read N- to C-terminus: Cysteine-rich receptor-like protein kinase 22 (660 aa).

The N-terminal stretch at 1 to 24 is a signal peptide; sequence MKQRSFLSILCFILLAFGVASVSA. 2 consecutive Gnk2-homologous domains span residues 25–128 and 137–250; these read QTCI…NISF and IEPQ…LFTF. At 25–294 the chain is on the extracellular side; that stretch reads QTCIENRKYF…DSRGVSAGIV (270 aa). 7 N-linked (GlcNAc...) asparagine glycosylation sites follow: asparagine 37, asparagine 53, asparagine 105, asparagine 125, asparagine 191, asparagine 230, and asparagine 256. Residues 264–273 show a composition bias toward pro residues; that stretch reads KPPMNVPRPP. The interval 264–283 is disordered; it reads KPPMNVPRPPSVGHGANTTD. Residues asparagine 280 and asparagine 284 are each glycosylated (N-linked (GlcNAc...) asparagine). A helical membrane pass occupies residues 295–315; the sequence is VVITVPAVVIVLILVVLGFFI. At 316 to 660 the chain is on the cytoplasmic side; it reads CWRRKSLQRT…DPLSEGLESG (345 aa). The Protein kinase domain occupies 353–632; sequence FSKSNKLGEG…IVSMLTSNTI (280 aa). ATP-binding positions include 359 to 367 and lysine 381; that span reads LGEGRFGEV. Position 426 is a phosphotyrosine (tyrosine 426). Aspartate 478 (proton acceptor) is an active-site residue. Residue serine 482 is modified to Phosphoserine. Position 518 is a phosphothreonine (threonine 518). Tyrosine 526 is modified (phosphotyrosine).

The protein belongs to the protein kinase superfamily. Ser/Thr protein kinase family. CRK subfamily.

It is found in the membrane. The enzyme catalyses L-seryl-[protein] + ATP = O-phospho-L-seryl-[protein] + ADP + H(+). It catalyses the reaction L-threonyl-[protein] + ATP = O-phospho-L-threonyl-[protein] + ADP + H(+). In Arabidopsis thaliana (Mouse-ear cress), this protein is Cysteine-rich receptor-like protein kinase 22 (CRK22).